A 1001-amino-acid polypeptide reads, in one-letter code: Phosphoenolpyruvate carboxylase (1001 aa).

Residues His189 and Lys642 contribute to the active site.

It belongs to the PEPCase type 1 family. It depends on Mg(2+) as a cofactor.

The catalysed reaction is oxaloacetate + phosphate = phosphoenolpyruvate + hydrogencarbonate. Forms oxaloacetate, a four-carbon dicarboxylic acid source for the tricarboxylic acid cycle. In Prochlorococcus marinus (strain SARG / CCMP1375 / SS120), this protein is Phosphoenolpyruvate carboxylase.